We begin with the raw amino-acid sequence, 229 residues long: Serine acetyltransferase (229 aa).

The protein belongs to the transferase hexapeptide repeat family.

It is found in the cytoplasm. It carries out the reaction L-serine + acetyl-CoA = O-acetyl-L-serine + CoA. It functions in the pathway amino-acid biosynthesis; L-cysteine biosynthesis; L-cysteine from L-serine: step 1/2. Its function is as follows. Catalyzes the acetylation of serine by acetyl-CoA to produce O-acetylserine (OAS). The chain is Serine acetyltransferase (cysE) from Mycobacterium tuberculosis (strain ATCC 25618 / H37Rv).